The chain runs to 398 residues: Phosphoglycerate kinase (398 aa).

Substrate-binding positions include 20–22 (DFN), Arg-35, 58–61 (HLGK), Arg-118, and Arg-155. ATP contacts are provided by residues Lys-208, Gly-296, Glu-327, and 354–357 (GGDS).

The protein belongs to the phosphoglycerate kinase family. As to quaternary structure, monomer.

The protein localises to the cytoplasm. It carries out the reaction (2R)-3-phosphoglycerate + ATP = (2R)-3-phospho-glyceroyl phosphate + ADP. It participates in carbohydrate degradation; glycolysis; pyruvate from D-glyceraldehyde 3-phosphate: step 2/5. In Fusobacterium nucleatum subsp. nucleatum (strain ATCC 25586 / DSM 15643 / BCRC 10681 / CIP 101130 / JCM 8532 / KCTC 2640 / LMG 13131 / VPI 4355), this protein is Phosphoglycerate kinase.